The chain runs to 168 residues: Photosystem I assembly protein Ycf3 (168 aa).

3 TPR repeats span residues 35–68, 72–105, and 120–153; these read AFAY…EMDP, SYIL…NPFL, and GEQA…TPDN.

Belongs to the Ycf3 family.

It is found in the plastid membrane. In terms of biological role, essential for the assembly of the photosystem I (PSI) complex. May act as a chaperone-like factor to guide the assembly of the PSI subunits. The polypeptide is Photosystem I assembly protein Ycf3 (Cuscuta obtusiflora (Peruvian dodder)).